The primary structure comprises 256 residues: Nuclear shuttle protein (256 aa).

The short motif at 21–42 (HSTGKRSRNVSRIDFKRRSSKY) is the Bipartite nuclear localization signal element. The Nuclear localization signal motif lies at 81–96 (SLGKTEPSRSRSYIKL). The interval 150-187 (ELFGARIHSHGNLAVSSALKDRFYIRHVFKRVISVEKD) is interaction with Arabidopsis thaliana NSI protein.

This sequence belongs to the begomovirus nuclear shuttle protein family. In terms of assembly, binds to single-stranded and double-stranded viral DNA. Interacts with the host nuclear shuttle interacting (NSI) protein. This interaction may allow NSP to recruit NSI monomers to the viral genome and thus regulate nuclear export of viral genome by NSP.

It is found in the host nucleus. Its subcellular location is the host cytoplasm. The protein localises to the host cell membrane. Binds to the genomic viral ssDNA, shuttles it into and out of the cell nucleus. Begomoviruses use 2 proteins to transport their DNA from cell to cell. The nuclear shuttle protein (NSP) shuttles it between nucleus and cytoplasm and the movement protein (MP) probably transports the DNA-NSP complex to the cell periphery and facilitates movement across the cell wall. The protein is Nuclear shuttle protein of Solanum lycopersicum (Tomato).